A 441-amino-acid polypeptide reads, in one-letter code: tRNA(Ile)-lysidine synthase (441 aa).

Residue 28-33 (SGGTDS) participates in ATP binding.

Belongs to the tRNA(Ile)-lysidine synthase family.

It localises to the cytoplasm. The catalysed reaction is cytidine(34) in tRNA(Ile2) + L-lysine + ATP = lysidine(34) in tRNA(Ile2) + AMP + diphosphate + H(+). In terms of biological role, ligates lysine onto the cytidine present at position 34 of the AUA codon-specific tRNA(Ile) that contains the anticodon CAU, in an ATP-dependent manner. Cytidine is converted to lysidine, thus changing the amino acid specificity of the tRNA from methionine to isoleucine. The protein is tRNA(Ile)-lysidine synthase of Orientia tsutsugamushi (strain Boryong) (Rickettsia tsutsugamushi).